The primary structure comprises 222 residues: Germin-like protein subfamily 1 member 13 (222 aa).

A signal peptide spans Met-1 to Ser-18. A disulfide bridge links Cys-32 with Cys-49. In terms of domain architecture, Cupin type-1 spans Ser-63 to Glu-214. An N-linked (GlcNAc...) asparagine glycan is attached at Asn-78. Mn(2+) is bound by residues His-111, His-113, Glu-118, and His-160.

It belongs to the germin family. In terms of assembly, oligomer (believed to be a pentamer but probably hexamer).

It is found in the secreted. The protein resides in the extracellular space. Its subcellular location is the apoplast. Its function is as follows. May play a role in plant defense. Probably has no oxalate oxidase activity even if the active site is conserved. The sequence is that of Germin-like protein subfamily 1 member 13 (GLP6) from Arabidopsis thaliana (Mouse-ear cress).